Here is a 393-residue protein sequence, read N- to C-terminus: Erythronate-4-phosphate dehydrogenase (393 aa).

Residues S57 and T79 each contribute to the substrate site. D159 lines the NAD(+) pocket. R229 is an active-site residue. NAD(+) is bound at residue D253. The active site involves E258. H275 serves as the catalytic Proton donor. NAD(+) is bound at residue G278. Y279 provides a ligand contact to substrate.

This sequence belongs to the D-isomer specific 2-hydroxyacid dehydrogenase family. PdxB subfamily. Homodimer.

Its subcellular location is the cytoplasm. The catalysed reaction is 4-phospho-D-erythronate + NAD(+) = (R)-3-hydroxy-2-oxo-4-phosphooxybutanoate + NADH + H(+). It functions in the pathway cofactor biosynthesis; pyridoxine 5'-phosphate biosynthesis; pyridoxine 5'-phosphate from D-erythrose 4-phosphate: step 2/5. In terms of biological role, catalyzes the oxidation of erythronate-4-phosphate to 3-hydroxy-2-oxo-4-phosphonooxybutanoate. The sequence is that of Erythronate-4-phosphate dehydrogenase from Colwellia psychrerythraea (strain 34H / ATCC BAA-681) (Vibrio psychroerythus).